The following is a 101-amino-acid chain: NADH-quinone oxidoreductase subunit K (101 aa).

Transmembrane regions (helical) follow at residues 5–25, 30–50, and 62–82; these read PNWYLALSAVLFTIGTFGVLF, IVVLMSVELMLNAVNLTLVTF, and LVFFSIAVAAAEAAVGLAIVI.

It belongs to the complex I subunit 4L family. As to quaternary structure, NDH-1 is composed of 14 different subunits. Subunits NuoA, H, J, K, L, M, N constitute the membrane sector of the complex.

The protein resides in the cell inner membrane. The enzyme catalyses a quinone + NADH + 5 H(+)(in) = a quinol + NAD(+) + 4 H(+)(out). Functionally, NDH-1 shuttles electrons from NADH, via FMN and iron-sulfur (Fe-S) centers, to quinones in the respiratory chain. The immediate electron acceptor for the enzyme in this species is believed to be a menaquinone. Couples the redox reaction to proton translocation (for every two electrons transferred, four hydrogen ions are translocated across the cytoplasmic membrane), and thus conserves the redox energy in a proton gradient. The polypeptide is NADH-quinone oxidoreductase subunit K (Salinibacter ruber (strain DSM 13855 / M31)).